The primary structure comprises 210 residues: Syntaxin-binding protein 6 (210 aa).

Ser2 carries the post-translational modification N-acetylserine. A v-SNARE coiled-coil homology domain is found at 151 to 210 (GNSILHSAADSVTSAVQKASQALNERGERLGRAEEKTEDLKNSAQQFAETAHKLAMKHKC).

Part of a ternary complex containing SNAP25 and STX1A that can be dissociated by NAPA and NSF. Interacts with STX4A.

The protein resides in the cytoplasm. It localises to the membrane. Forms non-fusogenic complexes with SNAP25 and STX1A and may thereby modulate the formation of functional SNARE complexes and exocytosis. This is Syntaxin-binding protein 6 (STXBP6) from Bos taurus (Bovine).